Consider the following 684-residue polypeptide: MYGITGNGYRLVSSYSPKGDQPKAIEQLVEGVQRGDRWQTLLGVTGSGKTFTISNLIAQVGKPVLVMSHNKTLAAQLYGELRQFFPDNAVEYFISYYDFYQPEAYLPALDKYIAKDLRINDEIERLRLKATSSLLSGRRDVIVVSSVSCIYGLGSPEEWKAQIIELRPGMEKDRDQFLQELVSLHYVRDDMKPGPGKFRVRGDIIDLVPAHEELAVRVEFFGPEIESLQTFDMQSGEVLGRDDYAFIYPARQFVAGEEQMRHAMLAIENELAGRLNELRGENRLIEARRLEERTRYDLEMMKELGYCSGIENYSRHLAGREPGDRPHCLLDYFPEDYLVVVDESHVTLPQIRGMYGGDRSRKTILVEHGFRLPSALDNRPLRFDEYVGLVPQVVCVSATPGDLELEYSGGVIVEQLVRPTGLLDPPVEVRPVKGQIDDLLGEIRKHTARGFKALIMTLTKRMSEDLDDYFRKTGIRSRYLHSEIKSLERMQILRELRTGEIDVLVGVNLLREGLDLPEVSLVAILDADKEGFLRNTRSLMQIAGRAARNSEGFVVLYADVLTRSIREVLDETSRRRKIQQAYNEEHGIVPQSIIKSVEQVLNTTGVADAEERYRRKRFGLEPKPERLLSTLIDTLTAEECYSMAESLRLEMQEAALKMEYEKAAYLRDEITKFEHRANEAGKGI.

The Helicase ATP-binding domain occupies 30–188 (EGVQRGDRWQ…QELVSLHYVR (159 aa)). 43 to 50 (GVTGSGKT) serves as a coordination point for ATP. Positions 96–119 (YYDFYQPEAYLPALDKYIAKDLRI) match the Beta-hairpin motif. Residues 435 to 601 (QIDDLLGEIR…SIIKSVEQVL (167 aa)) enclose the Helicase C-terminal domain. The 36-residue stretch at 641–676 (YSMAESLRLEMQEAALKMEYEKAAYLRDEITKFEHR) folds into the UVR domain.

Belongs to the UvrB family. Forms a heterotetramer with UvrA during the search for lesions. Interacts with UvrC in an incision complex.

The protein resides in the cytoplasm. Its function is as follows. The UvrABC repair system catalyzes the recognition and processing of DNA lesions. A damage recognition complex composed of 2 UvrA and 2 UvrB subunits scans DNA for abnormalities. Upon binding of the UvrA(2)B(2) complex to a putative damaged site, the DNA wraps around one UvrB monomer. DNA wrap is dependent on ATP binding by UvrB and probably causes local melting of the DNA helix, facilitating insertion of UvrB beta-hairpin between the DNA strands. Then UvrB probes one DNA strand for the presence of a lesion. If a lesion is found the UvrA subunits dissociate and the UvrB-DNA preincision complex is formed. This complex is subsequently bound by UvrC and the second UvrB is released. If no lesion is found, the DNA wraps around the other UvrB subunit that will check the other stand for damage. This chain is UvrABC system protein B, found in Chlorobium limicola (strain DSM 245 / NBRC 103803 / 6330).